Here is a 247-residue protein sequence, read N- to C-terminus: Fibroblast growth factor 14 (247 aa).

Disordered stretches follow at residues 1–38 and 216–247; these read MAAA…KNRG and ETVP…CKTT. A compositionally biased stretch (basic and acidic residues) spans 15–25; sequence QAREQHWDRPS.

It belongs to the heparin-binding growth factors family. As to quaternary structure, interacts with SCN8A.

It is found in the nucleus. In terms of biological role, probably involved in nervous system development and function. This is Fibroblast growth factor 14 (Fgf14) from Rattus norvegicus (Rat).